The chain runs to 733 residues: 1,4-alpha-glucan branching enzyme GlgB (733 aa).

Asp-412 functions as the Nucleophile in the catalytic mechanism. Glu-467 (proton donor) is an active-site residue.

The protein belongs to the glycosyl hydrolase 13 family. GlgB subfamily. As to quaternary structure, monomer.

The catalysed reaction is Transfers a segment of a (1-&gt;4)-alpha-D-glucan chain to a primary hydroxy group in a similar glucan chain.. The protein operates within glycan biosynthesis; glycogen biosynthesis. In terms of biological role, catalyzes the formation of the alpha-1,6-glucosidic linkages in glycogen by scission of a 1,4-alpha-linked oligosaccharide from growing alpha-1,4-glucan chains and the subsequent attachment of the oligosaccharide to the alpha-1,6 position. In Burkholderia vietnamiensis (strain G4 / LMG 22486) (Burkholderia cepacia (strain R1808)), this protein is 1,4-alpha-glucan branching enzyme GlgB.